Here is a 490-residue protein sequence, read N- to C-terminus: Sec sixty-one protein homolog (490 aa).

Over 1 to 32 (MSGFRLIDIVKPILPILPEVELPFEKLPFDDK) the chain is Cytoplasmic. A helical membrane pass occupies residues 33-53 (IVYTIFAGLIYLFAQFPLVGL). Residues 54-121 (PKATTPNVND…DRELFQSLTK (68 aa)) lie on the Lumenal side of the membrane. A helical membrane pass occupies residues 122 to 142 (VFAIVQYVILTNIFIFAGYFG). Topologically, residues 143–146 (DDLS) are cytoplasmic. A helical transmembrane segment spans residues 147–167 (VVQIGLINFQLVGAGIFTTLL). At 168 to 174 (AEVIDKG) the chain is on the lumenal side. A helical membrane pass occupies residues 175–195 (FGFSSGAMIINTVVIATNLVA). Residues 196–242 (DTFGVSQIKVGEDDQTEAQGALINLIQGLRSKHKTFIGGIISAFNRD) lie on the Cytoplasmic side of the membrane. A helical membrane pass occupies residues 243 to 263 (YLPNLTTTIIVLAIAIIVCYL). At 264-293 (QSVRVELPIRSTRARGTNNVYPIKLLYTGC) the chain is on the lumenal side. A helical membrane pass occupies residues 294 to 314 (LSVLFSYTILFYIHIFAFVLI). Residues 315–339 (QLVAKNEPTHIICKIMGHYENANNL) lie on the Cytoplasmic side of the membrane. A helical transmembrane segment spans residues 340 to 360 (LAVPTFPLSLLAPPTSFFKGV). Residue Thr-361 is a topological domain, lumenal. Residues 362–382 (QQPLTFITYSAFILVTGIWFA) traverse the membrane as a helical segment. The Cytoplasmic portion of the chain corresponds to 383–421 (DKWQAISGSSARDVALEFKDQGITLMGRREQNVAKELNK). Residues 422–442 (VIPIAAVTGASVLSLITVIGE) form a helical membrane-spanning segment. Residues 443–449 (SLGLKGK) are Lumenal-facing. A helical membrane pass occupies residues 450–470 (AAGIVVGIAGGFSLLEVITIE). The Cytoplasmic portion of the chain corresponds to 471-490 (YQQSGGQSALNQVLGVPGAM).

It belongs to the SecY/SEC61-alpha family. In terms of assembly, component of the heterotrimeric Ssh1 complex, which is composed of SSH1, SBH2 and SSS1.

It localises to the endoplasmic reticulum membrane. Functionally, part of the Ssh1 complex, which probably is the major component of a channel-forming translocon complex that may function exclusively in the cotranslational pathway of protein endoplasmic reticulum (ER) import. The protein is Sec sixty-one protein homolog (SSH1) of Saccharomyces cerevisiae (strain ATCC 204508 / S288c) (Baker's yeast).